Here is a 174-residue protein sequence, read N- to C-terminus: Shikimate kinase (174 aa).

Position 14 to 19 (14 to 19 (GAGKST)) interacts with ATP. Residue S18 participates in Mg(2+) binding. Substrate is bound by residues D36, R60, and G82. R120 contributes to the ATP binding site. Substrate is bound at residue R139. Q156 is an ATP binding site.

This sequence belongs to the shikimate kinase family. In terms of assembly, monomer. It depends on Mg(2+) as a cofactor.

It is found in the cytoplasm. The catalysed reaction is shikimate + ATP = 3-phosphoshikimate + ADP + H(+). Its pathway is metabolic intermediate biosynthesis; chorismate biosynthesis; chorismate from D-erythrose 4-phosphate and phosphoenolpyruvate: step 5/7. Functionally, catalyzes the specific phosphorylation of the 3-hydroxyl group of shikimic acid using ATP as a cosubstrate. This is Shikimate kinase from Vibrio cholerae serotype O1 (strain ATCC 39541 / Classical Ogawa 395 / O395).